The following is a 381-amino-acid chain: Tryptophan--tRNA ligase (381 aa).

The short motif at 82-90 (PSLGMHIGH) is the 'HIGH' region element. The short motif at 254–258 (KMSSS) is the 'KMSKS' region element.

It belongs to the class-I aminoacyl-tRNA synthetase family.

The protein localises to the cytoplasm. The enzyme catalyses tRNA(Trp) + L-tryptophan + ATP = L-tryptophyl-tRNA(Trp) + AMP + diphosphate + H(+). In Sulfolobus acidocaldarius (strain ATCC 33909 / DSM 639 / JCM 8929 / NBRC 15157 / NCIMB 11770), this protein is Tryptophan--tRNA ligase.